Here is a 543-residue protein sequence, read N- to C-terminus: Phosphoribosylaminoimidazole carboxylase (543 aa).

Residues 110 to 297 form the ATP-grasp domain; it reads KEHLIKNGIA…QFEAHVRAIT (188 aa). 137 to 192 is an ATP binding site; that stretch reads GAKYGFPYMLKSRTMAYDGRGNFVVKDKSYIPEALKVLDDRPLYAEKWAPFSKELA.

It in the C-terminal section; belongs to the AIR carboxylase family. Class I subfamily.

The enzyme catalyses 5-amino-1-(5-phospho-D-ribosyl)imidazole-4-carboxylate + H(+) = 5-amino-1-(5-phospho-beta-D-ribosyl)imidazole + CO2. It participates in purine metabolism; IMP biosynthesis via de novo pathway; 5-amino-1-(5-phospho-D-ribosyl)imidazole-4-carboxylate from 5-amino-1-(5-phospho-D-ribosyl)imidazole (carboxylase route): step 1/1. The sequence is that of Phosphoribosylaminoimidazole carboxylase (ADE1) from Ogataea methanolica (Yeast).